The primary structure comprises 61 residues: Small ribosomal subunit protein uS14B (61 aa).

Residues Cys24, Cys27, Cys40, and Cys43 each coordinate Zn(2+).

Belongs to the universal ribosomal protein uS14 family. Zinc-binding uS14 subfamily. As to quaternary structure, part of the 30S ribosomal subunit. Contacts proteins S3 and S10. The cofactor is Zn(2+).

Binds 16S rRNA, required for the assembly of 30S particles and may also be responsible for determining the conformation of the 16S rRNA at the A site. In Limosilactobacillus reuteri (strain DSM 20016) (Lactobacillus reuteri), this protein is Small ribosomal subunit protein uS14B.